The chain runs to 363 residues: NAD(P)H-quinone oxidoreductase subunit 1, chloroplastic (363 aa).

The next 8 helical transmembrane spans lie at 27-47 (LIPI…IVWL), 93-113 (WLFS…YLVV), 124-144 (LGVG…GLLM), 162-182 (AAQA…VALL), 200-220 (ILGW…IASL), 250-270 (FGLF…FVSV), 303-323 (ATLG…LSIL), and 343-363 (FLLP…LALL).

The protein belongs to the complex I subunit 1 family. As to quaternary structure, NDH is composed of at least 16 different subunits, 5 of which are encoded in the nucleus.

It is found in the plastid. It localises to the chloroplast thylakoid membrane. The catalysed reaction is a plastoquinone + NADH + (n+1) H(+)(in) = a plastoquinol + NAD(+) + n H(+)(out). It carries out the reaction a plastoquinone + NADPH + (n+1) H(+)(in) = a plastoquinol + NADP(+) + n H(+)(out). Functionally, NDH shuttles electrons from NAD(P)H:plastoquinone, via FMN and iron-sulfur (Fe-S) centers, to quinones in the photosynthetic chain and possibly in a chloroplast respiratory chain. The immediate electron acceptor for the enzyme in this species is believed to be plastoquinone. Couples the redox reaction to proton translocation, and thus conserves the redox energy in a proton gradient. This Chaetosphaeridium globosum (Charophycean green alga) protein is NAD(P)H-quinone oxidoreductase subunit 1, chloroplastic.